The following is a 243-amino-acid chain: Phosphoribosyl isomerase A (243 aa).

Asp-9 (proton acceptor) is an active-site residue. The Proton donor role is filled by Asp-128.

The protein belongs to the HisA/HisF family.

It localises to the cytoplasm. It carries out the reaction 1-(5-phospho-beta-D-ribosyl)-5-[(5-phospho-beta-D-ribosylamino)methylideneamino]imidazole-4-carboxamide = 5-[(5-phospho-1-deoxy-D-ribulos-1-ylimino)methylamino]-1-(5-phospho-beta-D-ribosyl)imidazole-4-carboxamide. The enzyme catalyses N-(5-phospho-beta-D-ribosyl)anthranilate = 1-(2-carboxyphenylamino)-1-deoxy-D-ribulose 5-phosphate. The protein operates within amino-acid biosynthesis; L-histidine biosynthesis; L-histidine from 5-phospho-alpha-D-ribose 1-diphosphate: step 4/9. It participates in amino-acid biosynthesis; L-tryptophan biosynthesis; L-tryptophan from chorismate: step 3/5. In terms of biological role, involved in both the histidine and tryptophan biosynthetic pathways. The polypeptide is Phosphoribosyl isomerase A (Mycolicibacterium paratuberculosis (strain ATCC BAA-968 / K-10) (Mycobacterium paratuberculosis)).